A 557-amino-acid chain; its full sequence is Dihydroxy-acid dehydratase (557 aa).

Cys-50 is a [2Fe-2S] cluster binding site. Asp-82 contacts Mg(2+). Cys-123 contributes to the [2Fe-2S] cluster binding site. The Mg(2+) site is built by Asp-124 and Lys-125. N6-carboxylysine is present on Lys-125. Cys-195 contributes to the [2Fe-2S] cluster binding site. Glu-447 contributes to the Mg(2+) binding site. Ser-473 acts as the Proton acceptor in catalysis.

The protein belongs to the IlvD/Edd family. Homodimer. The cofactor is [2Fe-2S] cluster. It depends on Mg(2+) as a cofactor.

It carries out the reaction (2R)-2,3-dihydroxy-3-methylbutanoate = 3-methyl-2-oxobutanoate + H2O. It catalyses the reaction (2R,3R)-2,3-dihydroxy-3-methylpentanoate = (S)-3-methyl-2-oxopentanoate + H2O. It functions in the pathway amino-acid biosynthesis; L-isoleucine biosynthesis; L-isoleucine from 2-oxobutanoate: step 3/4. It participates in amino-acid biosynthesis; L-valine biosynthesis; L-valine from pyruvate: step 3/4. Functionally, functions in the biosynthesis of branched-chain amino acids. Catalyzes the dehydration of (2R,3R)-2,3-dihydroxy-3-methylpentanoate (2,3-dihydroxy-3-methylvalerate) into 2-oxo-3-methylpentanoate (2-oxo-3-methylvalerate) and of (2R)-2,3-dihydroxy-3-methylbutanoate (2,3-dihydroxyisovalerate) into 2-oxo-3-methylbutanoate (2-oxoisovalerate), the penultimate precursor to L-isoleucine and L-valine, respectively. In Nitrosomonas eutropha (strain DSM 101675 / C91 / Nm57), this protein is Dihydroxy-acid dehydratase.